The chain runs to 116 residues: Diuretic hormone class 2 (116 aa).

The signal sequence occupies residues 1-25; the sequence is MTNRCACFALAFLLFCLLAISSIEA. The propeptide occupies 26-75; the sequence is APMPSQSNGGYGGAGYNELEEVPDDLLMELMTRFGRTIIRARNDLENSKR. The residue at position 106 (Pro-106) is a Proline amide. Residues 112–116 constitute a propeptide that is removed on maturation; sequence SETDV.

It is found in the secreted. Regulation of fluid secretion. Stimulates Malpighian tubules fluid secretion by activating the apical membrane V-ATPase via cyclic AMP of principal cells in the main secretory segment. The polypeptide is Diuretic hormone class 2 (Dh31) (Drosophila melanogaster (Fruit fly)).